Reading from the N-terminus, the 380-residue chain is Acyl-lipid (9+3)-(E)-desaturase (380 aa).

The segment at 1–25 (MGAGGCISVSETKPNQKNSLERAPY) is disordered. The segment covering 9–18 (VSETKPNQKN) has biased composition (polar residues). 2 helical membrane passes run 52-72 (LSYV…TTYF) and 81-101 (ALAW…VWVI). The short motif at 103-107 (HECGH) is the Histidine box-1 element. The Histidine box-2 motif lies at 139–143 (HRRHH). The next 3 membrane-spanning stretches (helical) occupy residues 177–197 (IGVL…FNVS), 223–243 (IYLS…AAMV), and 247–267 (VWLI…LVLV). A Histidine box-3 motif is present at residues 313-317 (HIVHH).

It belongs to the fatty acid desaturase type 1 family.

It localises to the membrane. It carries out the reaction a (9Z)-octadecenoyl-containing glycerolipid + 2 Fe(II)-[cytochrome b5] + O2 + 2 H(+) = a (9Z,12E)-octadecadienoyl-containing glycerolipid + 2 Fe(III)-[cytochrome b5] + 2 H2O. It catalyses the reaction a (9Z)-hexadecenoyl-containing glycerolipid + 2 Fe(II)-[cytochrome b5] + O2 + 2 H(+) = a (9Z,12E)-hexadecadienoyl-containing glycerolipid + 2 Fe(III)-[cytochrome b5] + 2 H2O. In terms of biological role, involved in the biosynthesis of dimorphecolic acid (9-OH-18:2(10E,12E)). Converts oleic acid (18:1(9Z)) into 18:2(9Z,12E) and probably palmitoleic acid (16:1(9Z)) into 16:2(9Z,12E). Very limited ability to catalyze (Z)-delta(12) desaturation. This chain is Acyl-lipid (9+3)-(E)-desaturase, found in Dimorphotheca sinuata (African daisy).